The sequence spans 119 residues: Large ribosomal subunit protein uL22 (119 aa).

Belongs to the universal ribosomal protein uL22 family. Part of the 50S ribosomal subunit.

Functionally, this protein binds specifically to 23S rRNA; its binding is stimulated by other ribosomal proteins, e.g. L4, L17, and L20. It is important during the early stages of 50S assembly. It makes multiple contacts with different domains of the 23S rRNA in the assembled 50S subunit and ribosome. In terms of biological role, the globular domain of the protein is located near the polypeptide exit tunnel on the outside of the subunit, while an extended beta-hairpin is found that lines the wall of the exit tunnel in the center of the 70S ribosome. The sequence is that of Large ribosomal subunit protein uL22 from Bifidobacterium longum (strain DJO10A).